A 780-amino-acid polypeptide reads, in one-letter code: Ribonucleoside-diphosphate reductase large subunit (780 aa).

Substrate contacts are provided by residues T177, 192–193, G223, 393–397, and 595–599; these read SC, NLCAE, and PTVGS. An intrachain disulfide couples C193 to C409. The active-site Proton acceptor is the N393. C395 (cysteine radical intermediate) is an active-site residue. The active-site Proton acceptor is the E397.

It belongs to the ribonucleoside diphosphate reductase large chain family. Heterotetramer composed of a homodimer of the large subunit (R1) and a homodimer of the small subunit (R2). Larger multisubunit protein complex are also active, composed of (R1)n(R2)n.

It catalyses the reaction a 2'-deoxyribonucleoside 5'-diphosphate + [thioredoxin]-disulfide + H2O = a ribonucleoside 5'-diphosphate + [thioredoxin]-dithiol. Functionally, ribonucleoside-diphosphate reductase holoenzyme provides the precursors necessary for viral DNA synthesis. Allows virus growth in non-dividing cells, as well as reactivation from latency in infected hosts. Catalyzes the biosynthesis of deoxyribonucleotides from the corresponding ribonucleotides. This is Ribonucleoside-diphosphate reductase large subunit from Connochaetes taurinus (Blue wildebeest).